The primary structure comprises 124 residues: Small ribosomal subunit protein uS12 (124 aa).

The disordered stretch occupies residues 1-22; the sequence is MATINQLVRKPRSRKVAKSDVP. D89 is subject to 3-methylthioaspartic acid. The segment at 104–124 is disordered; sequence TAGVNDRRQGRSKYGAKRGKS. The span at 113 to 124 shows a compositional bias: basic residues; sequence GRSKYGAKRGKS.

Belongs to the universal ribosomal protein uS12 family. As to quaternary structure, part of the 30S ribosomal subunit. Contacts proteins S8 and S17. May interact with IF1 in the 30S initiation complex.

With S4 and S5 plays an important role in translational accuracy. Functionally, interacts with and stabilizes bases of the 16S rRNA that are involved in tRNA selection in the A site and with the mRNA backbone. Located at the interface of the 30S and 50S subunits, it traverses the body of the 30S subunit contacting proteins on the other side and probably holding the rRNA structure together. The combined cluster of proteins S8, S12 and S17 appears to hold together the shoulder and platform of the 30S subunit. The polypeptide is Small ribosomal subunit protein uS12 (Hahella chejuensis (strain KCTC 2396)).